Consider the following 374-residue polypeptide: Carboxypeptidase O (374 aa).

A signal peptide spans 1–20 (MKPLLETLYLLGMLVPGGLG). The region spanning 49-344 (IYHPMGEIYE…EAVLSVLDDV (296 aa)) is the Peptidase M14 domain. 2 residues coordinate Zn(2+): His108 and Glu111. Asn132, Asn174, and Asn187 each carry an N-linked (GlcNAc...) asparagine glycan. His236 serves as a coordination point for Zn(2+). N-linked (GlcNAc...) asparagine glycosylation occurs at Asn251. The Proton donor/acceptor role is filled by Glu310. Asp352 carries the GPI-anchor amidated aspartate lipid modification. The propeptide at 353–374 (SAGRVTSATMLLGLLVSCMSLL) is removed in mature form.

Belongs to the peptidase M14 family. Zn(2+) serves as cofactor. N-glycosylated. As to expression, detected in enterocytes of the ileum.

Its subcellular location is the apical cell membrane. Strongly inhibited by potato carboxypeptidase inhibitor, and the chelating agents EDTA and 1,10-phenanthroline. Also inhibited by compounds with multiple carboxylic acid groups such as citrate and succinate, and to a lesser exent the amino acids aspartate and glutamate. Not significantly inhibited by benzylsuccinic acid. Functionally, carboxypeptidase which preferentially cleaves C-terminal acidic residues from peptides and proteins. Can also cleave C-terminal hydrophobic amino acids, with a preference for small residues over large residues. This Homo sapiens (Human) protein is Carboxypeptidase O.